Consider the following 154-residue polypeptide: Small ribosomal subunit protein bS6 (154 aa).

The disordered stretch occupies residues 94–154; sequence VKQEGPLPTP…SSQGKESQKS (61 aa). Over residues 103–112 the composition is skewed to polar residues; sequence PRSSNKGYNQ. Residues 113–139 show a composition bias toward basic and acidic residues; the sequence is SEKKDIESIDSTNKSEFKEEANDKKTA. The span at 140–154 shows a compositional bias: polar residues; that stretch reads TSESTSSQGKESQKS.

It belongs to the bacterial ribosomal protein bS6 family.

Its function is as follows. Binds together with bS18 to 16S ribosomal RNA. The chain is Small ribosomal subunit protein bS6 from Prochlorococcus marinus subsp. pastoris (strain CCMP1986 / NIES-2087 / MED4).